The chain runs to 160 residues: tRNA (cytidine(34)-2'-O)-methyltransferase (160 aa).

Positions 78, 100, 120, and 128 each coordinate S-adenosyl-L-methionine.

It belongs to the class IV-like SAM-binding methyltransferase superfamily. RNA methyltransferase TrmH family. TrmL subfamily. As to quaternary structure, homodimer.

It localises to the cytoplasm. It catalyses the reaction cytidine(34) in tRNA + S-adenosyl-L-methionine = 2'-O-methylcytidine(34) in tRNA + S-adenosyl-L-homocysteine + H(+). It carries out the reaction 5-carboxymethylaminomethyluridine(34) in tRNA(Leu) + S-adenosyl-L-methionine = 5-carboxymethylaminomethyl-2'-O-methyluridine(34) in tRNA(Leu) + S-adenosyl-L-homocysteine + H(+). Functionally, methylates the ribose at the nucleotide 34 wobble position in the two leucyl isoacceptors tRNA(Leu)(CmAA) and tRNA(Leu)(cmnm5UmAA). Catalyzes the methyl transfer from S-adenosyl-L-methionine to the 2'-OH of the wobble nucleotide. The protein is tRNA (cytidine(34)-2'-O)-methyltransferase of Beijerinckia indica subsp. indica (strain ATCC 9039 / DSM 1715 / NCIMB 8712).